Consider the following 374-residue polypeptide: Queuine tRNA-ribosyltransferase (374 aa).

Aspartate 91 acts as the Proton acceptor in catalysis. Residues 91–95, aspartate 145, glutamine 189, and glycine 216 each bind substrate; that span reads DSGGY. An RNA binding region spans residues 247–253; that stretch reads GVGTVPD. The Nucleophile role is filled by aspartate 266. Residues 271–275 are RNA binding; important for wobble base 34 recognition; that stretch reads TRNAR. Zn(2+) contacts are provided by cysteine 304, cysteine 306, cysteine 309, and histidine 335.

Belongs to the queuine tRNA-ribosyltransferase family. In terms of assembly, homodimer. Within each dimer, one monomer is responsible for RNA recognition and catalysis, while the other monomer binds to the replacement base PreQ1. Requires Zn(2+) as cofactor.

The enzyme catalyses 7-aminomethyl-7-carbaguanine + guanosine(34) in tRNA = 7-aminomethyl-7-carbaguanosine(34) in tRNA + guanine. The protein operates within tRNA modification; tRNA-queuosine biosynthesis. Its function is as follows. Catalyzes the base-exchange of a guanine (G) residue with the queuine precursor 7-aminomethyl-7-deazaguanine (PreQ1) at position 34 (anticodon wobble position) in tRNAs with GU(N) anticodons (tRNA-Asp, -Asn, -His and -Tyr). Catalysis occurs through a double-displacement mechanism. The nucleophile active site attacks the C1' of nucleotide 34 to detach the guanine base from the RNA, forming a covalent enzyme-RNA intermediate. The proton acceptor active site deprotonates the incoming PreQ1, allowing a nucleophilic attack on the C1' of the ribose to form the product. After dissociation, two additional enzymatic reactions on the tRNA convert PreQ1 to queuine (Q), resulting in the hypermodified nucleoside queuosine (7-(((4,5-cis-dihydroxy-2-cyclopenten-1-yl)amino)methyl)-7-deazaguanosine). This is Queuine tRNA-ribosyltransferase from Leptospira interrogans serogroup Icterohaemorrhagiae serovar Lai (strain 56601).